A 177-amino-acid chain; its full sequence is Inner membrane-spanning protein YciB (177 aa).

5 helical membrane-spanning segments follow: residues isoleucine 22–isoleucine 42, isoleucine 50–asparagine 70, tryptophan 76–methionine 96, phenylalanine 121–leucine 141, and valine 151–phenylalanine 171.

Belongs to the YciB family.

The protein localises to the cell inner membrane. Its function is as follows. Plays a role in cell envelope biogenesis, maintenance of cell envelope integrity and membrane homeostasis. The sequence is that of Inner membrane-spanning protein YciB from Buchnera aphidicola subsp. Schizaphis graminum (strain Sg).